A 308-amino-acid polypeptide reads, in one-letter code: tRNA dimethylallyltransferase 2 (308 aa).

ATP is bound at residue 13–20 (GPTASGKT). 15-20 (TASGKT) contacts substrate. The interaction with substrate tRNA stretch occupies residues 38 to 41 (DSRQ).

The protein belongs to the IPP transferase family. As to quaternary structure, monomer. Requires Mg(2+) as cofactor.

The catalysed reaction is adenosine(37) in tRNA + dimethylallyl diphosphate = N(6)-dimethylallyladenosine(37) in tRNA + diphosphate. Its function is as follows. Catalyzes the transfer of a dimethylallyl group onto the adenine at position 37 in tRNAs that read codons beginning with uridine, leading to the formation of N6-(dimethylallyl)adenosine (i(6)A). The sequence is that of tRNA dimethylallyltransferase 2 from Bacteroides fragilis (strain YCH46).